Reading from the N-terminus, the 323-residue chain is Prostaglandin F synthase 1 (323 aa).

NADP(+) is bound by residues 20–24 and Asp50; that span reads GFGTY. The active-site Proton donor is the Tyr55. His117 contacts substrate. Residues 166 to 167, Gln190, 216 to 221, and 270 to 280 each bind NADP(+); these read SN, YAALGA, and KSFNKKRIKEN.

Belongs to the aldo/keto reductase family. As to quaternary structure, monomer. In terms of processing, the N-terminus is blocked.

It is found in the cytoplasm. The enzyme catalyses prostaglandin F2alpha + NADP(+) = prostaglandin D2 + NADPH + H(+). It functions in the pathway lipid metabolism; prostaglandin biosynthesis. Functionally, catalyzes the reduction of PGD(2) and PGH(2) to PGF(2 alpha) and a stereoisomer, respectively. It has a broad substrate specificity and also reduces other carbonyl compounds. The chain is Prostaglandin F synthase 1 from Bos taurus (Bovine).